The sequence spans 414 residues: Serine--tRNA ligase (414 aa).

230-232 (TAE) is an L-serine binding site. 261–263 (RKE) contributes to the ATP binding site. E284 serves as a coordination point for L-serine. 348-351 (EISS) contributes to the ATP binding site. S382 is an L-serine binding site.

It belongs to the class-II aminoacyl-tRNA synthetase family. Type-1 seryl-tRNA synthetase subfamily. Homodimer. The tRNA molecule binds across the dimer.

Its subcellular location is the cytoplasm. It carries out the reaction tRNA(Ser) + L-serine + ATP = L-seryl-tRNA(Ser) + AMP + diphosphate + H(+). The enzyme catalyses tRNA(Sec) + L-serine + ATP = L-seryl-tRNA(Sec) + AMP + diphosphate + H(+). The protein operates within aminoacyl-tRNA biosynthesis; selenocysteinyl-tRNA(Sec) biosynthesis; L-seryl-tRNA(Sec) from L-serine and tRNA(Sec): step 1/1. Functionally, catalyzes the attachment of serine to tRNA(Ser). Is also able to aminoacylate tRNA(Sec) with serine, to form the misacylated tRNA L-seryl-tRNA(Sec), which will be further converted into selenocysteinyl-tRNA(Sec). The chain is Serine--tRNA ligase from Sulfurovum sp. (strain NBC37-1).